A 282-amino-acid polypeptide reads, in one-letter code: Sulfur carrier protein FdhD (282 aa).

Residue cysteine 115 is the Cysteine persulfide intermediate of the active site.

It belongs to the FdhD family.

Its subcellular location is the cytoplasm. Required for formate dehydrogenase (FDH) activity. Acts as a sulfur carrier protein that transfers sulfur from IscS to the molybdenum cofactor prior to its insertion into FDH. The sequence is that of Sulfur carrier protein FdhD from Streptomyces avermitilis (strain ATCC 31267 / DSM 46492 / JCM 5070 / NBRC 14893 / NCIMB 12804 / NRRL 8165 / MA-4680).